A 134-amino-acid chain; its full sequence is MNTEPTWMAEVVFDENGLIPAIAQDAETGQILMVAWMNREALAETAATGRAVYWSRSRQRLWRKGEESGHAQDVHELRLDCDGDVILLKVHQNGGIACHTGRASCFYRRLEGTASQAEWITIDPVLKDPELIYK.

D80 contacts Mg(2+). Zn(2+) is bound at residue C81. Mg(2+) contacts are provided by D82 and D84. Residues C98 and C105 each contribute to the Zn(2+) site.

This sequence belongs to the PRA-CH family. In terms of assembly, homodimer. The cofactor is Mg(2+). It depends on Zn(2+) as a cofactor.

It is found in the cytoplasm. The enzyme catalyses 1-(5-phospho-beta-D-ribosyl)-5'-AMP + H2O = 1-(5-phospho-beta-D-ribosyl)-5-[(5-phospho-beta-D-ribosylamino)methylideneamino]imidazole-4-carboxamide. The protein operates within amino-acid biosynthesis; L-histidine biosynthesis; L-histidine from 5-phospho-alpha-D-ribose 1-diphosphate: step 3/9. In terms of biological role, catalyzes the hydrolysis of the adenine ring of phosphoribosyl-AMP. The chain is Phosphoribosyl-AMP cyclohydrolase from Bordetella bronchiseptica (strain ATCC BAA-588 / NCTC 13252 / RB50) (Alcaligenes bronchisepticus).